A 343-amino-acid chain; its full sequence is Uroporphyrinogen decarboxylase (343 aa).

Substrate-binding positions include 23–27, Asp-73, Tyr-149, Thr-204, and His-320; that span reads RQAGR.

Belongs to the uroporphyrinogen decarboxylase family. Homodimer.

The protein localises to the cytoplasm. It catalyses the reaction uroporphyrinogen III + 4 H(+) = coproporphyrinogen III + 4 CO2. The protein operates within porphyrin-containing compound metabolism; protoporphyrin-IX biosynthesis; coproporphyrinogen-III from 5-aminolevulinate: step 4/4. Functionally, catalyzes the decarboxylation of four acetate groups of uroporphyrinogen-III to yield coproporphyrinogen-III. The sequence is that of Uroporphyrinogen decarboxylase from Bradyrhizobium sp. (strain BTAi1 / ATCC BAA-1182).